A 261-amino-acid chain; its full sequence is Caveolae-associated protein 3 (261 aa).

Residues 1-84 (MRESALERGP…SNTLAQLLAK (84 aa)) are interaction with CAVIN1. The leucine-zipper stretch occupies residues 20–78 (VHAVTVVTLLEKLASMLETLRERQGGLARRQGGLAGSVRRIQSGLGALSRSHDTTSNTL). Phosphoserine occurs at positions 62 and 70. Residue Lys-128 forms a Glycyl lysine isopeptide (Lys-Gly) (interchain with G-Cter in SUMO2) linkage. An interaction with CAV1 region spans residues 135–203 (ASAFQKAPEP…SGRKGPAAPP (69 aa)). The segment at 139-261 (QKAPEPLGPA…EALLQMESVA (123 aa)) is disordered. The segment covering 158 to 170 (LEAEVGESSDEEP) has biased composition (acidic residues). Residues Ser-165, Ser-166, and Ser-173 each carry the phosphoserine modification. Positions 200–212 (AAPPPTPVKPPRL) are enriched in pro residues. Residues 213–231 (GPGRSAEAQPEAQPALEPT) are compositionally biased toward low complexity.

Belongs to the CAVIN family. In terms of assembly, component of the CAVIN complex composed of CAVIN1, CAVIN2, CAVIN3 and CAVIN4. Interacts with PRKCD and with phosphatidylserine. Phosphatidylserine may form a bridge between PKC and PKC-binding partners and stabilize the binding. Interacts with PER2. Interacts with CAVIN1. Interacts (via leucine-zipper domain) with CAV1 in a cholesterol-sensitive manner. Interacts with EPS15L1. In terms of processing, in vitro, phosphorylated by PRKCD. In terms of tissue distribution, skeletal muscle, liver, stomach, lung, kidney and heart (at protein level). Strongly expressed in mammary and epithelial cells.

The protein resides in the cytoplasm. Its subcellular location is the membrane. It localises to the caveola. The protein localises to the cytosol. Functionally, regulates the traffic and/or budding of caveolae. Plays a role in caveola formation in a tissue-specific manner. Required for the formation of caveolae in smooth muscle but not in the lung and heart endothelial cells. Regulates the equilibrium between cell surface-associated and cell surface-dissociated caveolae by promoting the rapid release of caveolae from the cell surface. Plays a role in the regulation of the circadian clock. Modulates the period length and phase of circadian gene expression and also regulates expression and interaction of the core clock components PER1/2 and CRY1/2. The polypeptide is Caveolae-associated protein 3 (Homo sapiens (Human)).